The sequence spans 156 residues: Ribonuclease H (156 aa).

The RNase H type-1 domain maps to 3 to 144 (ERKLIHIFTD…CDILARSAAE (142 aa)). The Mg(2+) site is built by D12, E50, D72, and D136.

The protein belongs to the RNase H family. As to quaternary structure, monomer. Mg(2+) is required as a cofactor.

The protein localises to the cytoplasm. The catalysed reaction is Endonucleolytic cleavage to 5'-phosphomonoester.. Its function is as follows. Endonuclease that specifically degrades the RNA of RNA-DNA hybrids. This chain is Ribonuclease H, found in Shewanella putrefaciens (strain CN-32 / ATCC BAA-453).